The sequence spans 30 residues: Mycofactocin precursor peptide (30 aa).

It belongs to the mycofactocin precursor peptide family. As to quaternary structure, interacts with MftB. Post-translationally, the post-translational modifications that lead to mycofactocin involve oxidative decarboxylation of the C-terminal tyrosine residue catalyzed by MftC, introduction of a tyramine-valine cross-link, removal of the modified C-terminal dipeptide by MftE. The released dipeptide then undergoes oxidative deamination by MftD, glycosylation by MftF and methylation by an unknown enzyme.

Its function is as follows. Precursor peptide that leads to mycofactocin (MFT) after extensive post-translational modifications by enzymes encoded by adjacent genes. Mycofactocin acts as a redox cofactor of nicotinamide-dependent oxidoreductases encoded in the same locus. In Mycobacterium ulcerans (strain Agy99), this protein is Mycofactocin precursor peptide.